A 156-amino-acid chain; its full sequence is Small ribosomal subunit protein uS7 (156 aa).

This sequence belongs to the universal ribosomal protein uS7 family. In terms of assembly, part of the 30S ribosomal subunit. Contacts proteins S9 and S11.

Functionally, one of the primary rRNA binding proteins, it binds directly to 16S rRNA where it nucleates assembly of the head domain of the 30S subunit. Is located at the subunit interface close to the decoding center, probably blocks exit of the E-site tRNA. The chain is Small ribosomal subunit protein uS7 from Brachyspira hyodysenteriae (strain ATCC 49526 / WA1).